A 335-amino-acid chain; its full sequence is Glutamyl-tRNA reductase (335 aa).

Residues 60–63 (TCHR), S110, 115–117 (ETE), and Q121 contribute to the substrate site. Catalysis depends on C61, which acts as the Nucleophile. 189-194 (GYSEIN) provides a ligand contact to NADP(+).

The protein belongs to the glutamyl-tRNA reductase family. As to quaternary structure, homodimer.

The catalysed reaction is (S)-4-amino-5-oxopentanoate + tRNA(Glu) + NADP(+) = L-glutamyl-tRNA(Glu) + NADPH + H(+). It functions in the pathway porphyrin-containing compound metabolism; protoporphyrin-IX biosynthesis; 5-aminolevulinate from L-glutamyl-tRNA(Glu): step 1/2. Functionally, catalyzes the NADPH-dependent reduction of glutamyl-tRNA(Glu) to glutamate 1-semialdehyde (GSA). This is Glutamyl-tRNA reductase from Chlamydia trachomatis serovar D (strain ATCC VR-885 / DSM 19411 / UW-3/Cx).